Reading from the N-terminus, the 202-residue chain is Energy-coupling factor transporter transmembrane protein BioN (202 aa).

The next 3 helical transmembrane spans lie at 21 to 40, 44 to 63, and 68 to 90; these read LLSL…LLLL, VLVA…EALL, and IFLT…AALV.

Belongs to the CbiQ family. Part of a biotin transporter complex composed of BioM, BioN and BioY.

It localises to the cell inner membrane. Its function is as follows. Involved in biotin uptake. The polypeptide is Energy-coupling factor transporter transmembrane protein BioN (bioN) (Rhizobium etli (strain ATCC 51251 / DSM 11541 / JCM 21823 / NBRC 15573 / CFN 42)).